We begin with the raw amino-acid sequence, 444 residues long: MTTEKEMKQIQNEFKERMDEGELLNCMRCGFCLPSCPTYIESGFQETHSPRGRIALMKAVADGMIEPDEDVERSLSLCLGCRACEPVCPSGVKYGQLLEEARDIIHQNKKHSLGERVMRKTAFHELFPHQNRMRSAVSLIGLYQRSGLQTAVRKSGMLRVLPEHLRTMEAVLPDVPKSKDMKHRPRFLPSIGPMKKRVAFFSGCLMDTMFLPTNNATLKLLQLAGCDIVIPPEQACCGALHGHSGEKNTGKELAKQNIAAFEALDVDAVITNAGGCGAFLTEYDHLLKDDPEWSERAAAFVQKLKDFSSVLVELDFHQMDLALETPQVVTYQDSCHLRNVMHTSLEPRQLLKSIKGAEFKEMEKADSCCGSAGIYNIVEVEMSMKILDSKMAAVKATEAILIVTANPGCLLQMKLGIEREGLSGKVRAVHLADLLLEAAGHKTS.

4Fe-4S ferredoxin-type domains lie at 14–46 (FKER…GFQE) and 69–100 (EDVE…LLEE). The [4Fe-4S] cluster site is built by Cys26, Cys29, Cys32, Cys36, Cys78, Cys81, Cys84, and Cys88.

The glycolate oxidase likely consists of several subunits including GlcD and GlcF. It depends on [4Fe-4S] cluster as a cofactor.

The protein localises to the cell membrane. The catalysed reaction is glycolate + A = glyoxylate + AH2. The enzyme catalyses (R)-lactate + A = pyruvate + AH2. Its function is as follows. Component of a complex that catalyzes the oxidation of glycolate to glyoxylate. Is also able to oxidize D-lactate ((R)-lactate). Does not link directly to O(2), and 2,6-dichloroindophenol (DCIP) and phenazine methosulfate (PMS) can act as artificial electron acceptors in vitro, but the physiological molecule that functions as primary electron acceptor during glycolate oxidation is unknown. This is Probable glycolate oxidase iron-sulfur subunit (glcF) from Bacillus subtilis (strain 168).